We begin with the raw amino-acid sequence, 174 residues long: uncharacterized protein (174 aa).

The protein belongs to the gamma-class carbonic anhydrase family.

This is an uncharacterized protein from Pseudomonas aeruginosa (strain ATCC 15692 / DSM 22644 / CIP 104116 / JCM 14847 / LMG 12228 / 1C / PRS 101 / PAO1).